Here is a 308-residue protein sequence, read N- to C-terminus: Taste receptor type 2 member 107 (308 aa).

Residues 1–7 (MLNSAEG) lie on the Extracellular side of the membrane. A helical transmembrane segment spans residues 8 to 28 (ILLCVVTSEAVLGVLGDTYIA). At 29–43 (LFNCMDYAKNKKLSK) the chain is on the cytoplasmic side. The helical transmembrane segment at 44–64 (IGFILIGLAISRIGVVWIIIL) threads the bilayer. The Extracellular segment spans residues 65-87 (QGYIQVFFPHMLTSGNITEYITY). The N-linked (GlcNAc...) asparagine glycan is linked to Asn80. The helical transmembrane segment at 88–108 (IWVFLNHLSVWFVTNLNILYF) threads the bilayer. Residues 109-125 (LKIANFSNSVFLWLKRR) lie on the Cytoplasmic side of the membrane. A helical transmembrane segment spans residues 126–146 (VNAVFIFLSGCLLTSWLLCFP). Over 147–180 (QMTKILQNSKMHQRNTSWVHQRKNYFLINQSVTN) the chain is Extracellular. N-linked (GlcNAc...) asparagine glycans are attached at residues Asn161 and Asn175. The helical transmembrane segment at 181-201 (LGIFFFIIVSLITCFLLIVFL) threads the bilayer. Residues 202 to 232 (WRHVRQMHSDVSGFRDHSTKVHVKAMKFLIS) lie on the Cytoplasmic side of the membrane. A helical transmembrane segment spans residues 233 to 253 (FMVFFILHFVGLSIEVLCFIL). Over 254-258 (PQNKL) the chain is Extracellular. Residues 259–279 (LFITGLTATCLYPCGHSIIVI) traverse the membrane as a helical segment. The Cytoplasmic portion of the chain corresponds to 280 to 308 (LGNKQLKQASLKALQQLKCCETKGNFRVK).

The protein belongs to the G-protein coupled receptor T2R family.

It localises to the membrane. Putative taste receptor which may play a role in the perception of bitterness. The chain is Taste receptor type 2 member 107 from Mus musculus (Mouse).